The chain runs to 721 residues: Putative cullin-like protein 1 (721 aa).

In terms of domain architecture, Cullin neddylation spans 651 to 713; the sequence is DRRYAIDAAL…RDYLERDTEN (63 aa).

It belongs to the cullin family.

This chain is Putative cullin-like protein 1, found in Arabidopsis thaliana (Mouse-ear cress).